A 228-amino-acid chain; its full sequence is Uracil-DNA glycosylase (228 aa).

Asp64 serves as the catalytic Proton acceptor.

It belongs to the uracil-DNA glycosylase (UDG) superfamily. UNG family.

It localises to the cytoplasm. It carries out the reaction Hydrolyzes single-stranded DNA or mismatched double-stranded DNA and polynucleotides, releasing free uracil.. Its function is as follows. Excises uracil residues from the DNA which can arise as a result of misincorporation of dUMP residues by DNA polymerase or due to deamination of cytosine. This chain is Uracil-DNA glycosylase, found in Yersinia pseudotuberculosis serotype IB (strain PB1/+).